A 403-amino-acid chain; its full sequence is Phosphoglycerate kinase (403 aa).

Residues 22-24, Arg37, 60-63, Arg119, and Arg156 contribute to the substrate site; these read DLN and HLGR. ATP-binding positions include Lys206, Gly302, Glu333, and 359 to 362; that span reads GGDS.

The protein belongs to the phosphoglycerate kinase family. In terms of assembly, monomer.

The protein localises to the cytoplasm. It catalyses the reaction (2R)-3-phosphoglycerate + ATP = (2R)-3-phospho-glyceroyl phosphate + ADP. Its pathway is carbohydrate degradation; glycolysis; pyruvate from D-glyceraldehyde 3-phosphate: step 2/5. The polypeptide is Phosphoglycerate kinase (Streptomyces avermitilis (strain ATCC 31267 / DSM 46492 / JCM 5070 / NBRC 14893 / NCIMB 12804 / NRRL 8165 / MA-4680)).